A 214-amino-acid polypeptide reads, in one-letter code: Phosphoenolpyruvate guanylyltransferase (214 aa).

Phosphoenolpyruvate contacts are provided by threonine 148, glycine 163, and serine 166.

It belongs to the CofC family.

The enzyme catalyses phosphoenolpyruvate + GTP + H(+) = enolpyruvoyl-2-diphospho-5'-guanosine + diphosphate. It functions in the pathway cofactor biosynthesis; coenzyme F420 biosynthesis. Its function is as follows. Guanylyltransferase that catalyzes the activation of phosphoenolpyruvate (PEP) as enolpyruvoyl-2-diphospho-5'-guanosine, via the condensation of PEP with GTP. It is involved in the biosynthesis of coenzyme F420, a hydride carrier cofactor. The protein is Phosphoenolpyruvate guanylyltransferase of Mycolicibacterium gilvum (strain PYR-GCK) (Mycobacterium gilvum (strain PYR-GCK)).